A 227-amino-acid polypeptide reads, in one-letter code: Charged multivesicular body protein 4b (227 aa).

Disordered stretches follow at residues 1-26 (MSGI…SPQE) and 186-227 (SGPE…AGNM). The span at 9-20 (FGAGAGGKGAGK) shows a compositional bias: gly residues. Residues 25 to 185 (QEAIQRLRDT…EELDKNLLEI (161 aa)) are a coiled coil.

The protein belongs to the SNF7 family. In terms of assembly, probable core component of the endosomal sorting required for transport complex III (ESCRT-III). ESCRT-III components are thought to multimerize to form a flat lattice on the perimeter membrane of the endosome.

It localises to the cytoplasm. The protein resides in the cytosol. The protein localises to the late endosome membrane. It is found in the midbody. Probable core component of the endosomal sorting required for transport complex III (ESCRT-III) which is involved in multivesicular bodies (MVBs) formation and sorting of endosomal cargo proteins into MVBs. MVBs contain intraluminal vesicles (ILVs) that are generated by invagination and scission from the limiting membrane of the endosome and mostly are delivered to lysosomes enabling degradation of membrane proteins, such as stimulated growth factor receptors, lysosomal enzymes and lipids. The polypeptide is Charged multivesicular body protein 4b (CHMP4B) (Gallus gallus (Chicken)).